Reading from the N-terminus, the 480-residue chain is CASP8 and FADD-like apoptosis regulator (480 aa).

DED domains follow at residues 1–73 (MSAE…RILK) and 92–170 (DYRV…KIQK). An interaction with CASP8 region spans residues 1-195 (MSAEVIHQVE…LQAAIQKSFK (195 aa)). Residues 1–227 (MSAEVIHQVE…GTQQEPVKKS (227 aa)) form an interaction with FADD region. The segment at 1-305 (MSAEVIHQVE…FACMPEHRDY (305 aa)) is interaction with CASP8 propeptide. A not proteolytically processed and involved in apoptosis inhibition region spans residues 1 to 435 (MSAEVIHQVE…CLSQKLRQER (435 aa)). Residues 192–435 (KSFKDPSNNF…CLSQKLRQER (244 aa)) form an interaction with CASP3 region. The segment at 192–480 (KSFKDPSNNF…LRKKLIPSYT (289 aa)) is interaction with TRAF1 and TRAF2. The tract at residues 217 to 480 (LGTQQEPVKK…LRKKLIPSYT (264 aa)) is interaction with CASP8 subunits p18 and p10. A caspase region spans residues 263–358 (ETELLRDTFT…AGKPKIFFIQ (96 aa)). Positions 370–480 (SSLLEVDGPA…LRKKLIPSYT (111 aa)) are interaction with CASP8.

This sequence belongs to the peptidase C14A family. As to quaternary structure, TNFRSF6 stimulation triggers recruitment to the death-inducing signaling complex (DISC) formed by TNFRSF6, FADD and CASP8. A proteolytic fragment (p43) stays associated with the DISC. Interacts with RIPK1. Post-translationally, proteolytically processed by CASP8 generating subunit p43 and p12.

Its function is as follows. Apoptosis regulator protein which may function as a crucial link between cell survival and cell death pathways in mammalian cells. Acts as an inhibitor of TNFRSF6 mediated apoptosis. A proteolytic fragment (p43) is likely retained in the death-inducing signaling complex (DISC) thereby blocking further recruitment and processing of caspase-8 at the complex. Full length and shorter isoforms have been shown either to induce apoptosis or to reduce TNFRSF-triggered apoptosis. Lacks enzymatic (caspase) activity. The chain is CASP8 and FADD-like apoptosis regulator (CFLAR) from Pongo abelii (Sumatran orangutan).